Here is a 78-residue protein sequence, read N- to C-terminus: Acyl carrier protein (78 aa).

Residues 2 to 77 (STIEERVKKI…AAIDFINANQ (76 aa)) form the Carrier domain. At Ser-37 the chain carries O-(pantetheine 4'-phosphoryl)serine.

This sequence belongs to the acyl carrier protein (ACP) family. 4'-phosphopantetheine is transferred from CoA to a specific serine of apo-ACP by AcpS. This modification is essential for activity because fatty acids are bound in thioester linkage to the sulfhydryl of the prosthetic group.

It is found in the cytoplasm. The protein operates within lipid metabolism; fatty acid biosynthesis. In terms of biological role, carrier of the growing fatty acid chain in fatty acid biosynthesis. The sequence is that of Acyl carrier protein from Yersinia pseudotuberculosis serotype O:1b (strain IP 31758).